The primary structure comprises 498 residues: MKYQRVKGTQDYGVEKAFLKDAVESLFLKEVRLHGFEYVELPTLEHAQLFRSTVAQSDIGNKEMYEFLDKSQRELCLRPEMTANFVRAFVQNKWHAASAENKYAYVGKVFRYERPQKGRYREFTQAGVEFVGKADFFKDLYVITLVLRLLAKLHIKYTLKLNYISNKETRKKYEETLHKYLLEYKDQLSESSQKRLETGNVFRVLDDKEDSQKDFVKNAPKLSDFYSEEDKEYVKNIKRGLDTYHGLEYQFDEQVVRGLDYYDDLVFEVSIKDSKAAQDVIIGGGRYSNLIKDLEGPETSSIGFAMGVDRVVDYLMDQEVYKEHLDKLETAHSENEYYFWAHPEASYKLNFFVWFFNLQLNEHISSSLLFDYDSPNRNKAFEKAKKLNSKAFVTLEEDNSLTVYDFKYGTKKDADLKEQYHHLDFTSLLDSRHFDNLFDSNLFKPSPKELMCMCSAFRNRFGDSKALLKFAKQFHYSEDDVYFSDQKIKKSKWKSAKS.

Belongs to the class-II aminoacyl-tRNA synthetase family. In terms of assembly, homodimer.

It is found in the cytoplasm. The enzyme catalyses tRNA(His) + L-histidine + ATP = L-histidyl-tRNA(His) + AMP + diphosphate + H(+). This is Histidine--tRNA ligase from Mycoplasmopsis synoviae (strain 53) (Mycoplasma synoviae).